Reading from the N-terminus, the 450-residue chain is UPF0210 protein MK1214 (450 aa).

It belongs to the UPF0210 family.

The sequence is that of UPF0210 protein MK1214 from Methanopyrus kandleri (strain AV19 / DSM 6324 / JCM 9639 / NBRC 100938).